We begin with the raw amino-acid sequence, 1182 residues long: Retrotransposable element SLACS 132 kDa protein (1182 aa).

4 disordered regions span residues 77–97 (GERS…PRER), 163–220 (DVLD…STDQ), 317–339 (RRKR…ALRL), and 418–478 (RTAR…STAP). Over residues 163–174 (DVLDEEEQDDDL) the composition is skewed to acidic residues. Basic and acidic residues predominate over residues 420–446 (ARREQQQQRGKDNQEEEDRQKKEEKSL). A compositionally biased stretch (polar residues) spans 456 to 475 (SVRQGGQPSSSQPKRLNRWS). Residues 560–790 (NADVSMEVGR…TGDTGFGTAV (231 aa)) form the Reverse transcriptase domain.

The catalysed reaction is DNA(n) + a 2'-deoxyribonucleoside 5'-triphosphate = DNA(n+1) + diphosphate. The polypeptide is Retrotransposable element SLACS 132 kDa protein (Trypanosoma brucei gambiense).